The following is a 304-amino-acid chain: Methionyl-tRNA formyltransferase (304 aa).

111-114 (SLLP) is a binding site for (6S)-5,6,7,8-tetrahydrofolate.

Belongs to the Fmt family.

It carries out the reaction L-methionyl-tRNA(fMet) + (6R)-10-formyltetrahydrofolate = N-formyl-L-methionyl-tRNA(fMet) + (6S)-5,6,7,8-tetrahydrofolate + H(+). In terms of biological role, attaches a formyl group to the free amino group of methionyl-tRNA(fMet). The formyl group appears to play a dual role in the initiator identity of N-formylmethionyl-tRNA by promoting its recognition by IF2 and preventing the misappropriation of this tRNA by the elongation apparatus. The chain is Methionyl-tRNA formyltransferase from Campylobacter fetus subsp. fetus (strain 82-40).